The following is a 451-amino-acid chain: uncharacterized protein (451 aa).

The TRAM domain occupies 2-60 (VVKVKQKIPLKIKRMGINGEGIGFYQKTLVFVPGALKGEDIFCQITAVKRNFAEAKLLT). Cys73, Cys79, Cys82, and Cys162 together coordinate [4Fe-4S] cluster. S-adenosyl-L-methionine-binding residues include Gln283, Tyr312, Asp333, and Asp381. Cys408 functions as the Nucleophile in the catalytic mechanism.

The protein belongs to the class I-like SAM-binding methyltransferase superfamily. RNA M5U methyltransferase family.

This is an uncharacterized protein from Streptococcus pyogenes serotype M1.